A 610-amino-acid chain; its full sequence is Dihydroxy-acid dehydratase (610 aa).

D81 is a Mg(2+) binding site. C122 provides a ligand contact to [2Fe-2S] cluster. 2 residues coordinate Mg(2+): D123 and K124. Position 124 is an N6-carboxylysine (K124). C196 lines the [2Fe-2S] cluster pocket. E492 is a Mg(2+) binding site. S518 (proton acceptor) is an active-site residue.

It belongs to the IlvD/Edd family. Homodimer. It depends on [2Fe-2S] cluster as a cofactor. Mg(2+) serves as cofactor.

It catalyses the reaction (2R)-2,3-dihydroxy-3-methylbutanoate = 3-methyl-2-oxobutanoate + H2O. The catalysed reaction is (2R,3R)-2,3-dihydroxy-3-methylpentanoate = (S)-3-methyl-2-oxopentanoate + H2O. Its pathway is amino-acid biosynthesis; L-isoleucine biosynthesis; L-isoleucine from 2-oxobutanoate: step 3/4. The protein operates within amino-acid biosynthesis; L-valine biosynthesis; L-valine from pyruvate: step 3/4. Functionally, functions in the biosynthesis of branched-chain amino acids. Catalyzes the dehydration of (2R,3R)-2,3-dihydroxy-3-methylpentanoate (2,3-dihydroxy-3-methylvalerate) into 2-oxo-3-methylpentanoate (2-oxo-3-methylvalerate) and of (2R)-2,3-dihydroxy-3-methylbutanoate (2,3-dihydroxyisovalerate) into 2-oxo-3-methylbutanoate (2-oxoisovalerate), the penultimate precursor to L-isoleucine and L-valine, respectively. This Ruegeria pomeroyi (strain ATCC 700808 / DSM 15171 / DSS-3) (Silicibacter pomeroyi) protein is Dihydroxy-acid dehydratase.